The sequence spans 326 residues: UDP-3-O-acylglucosamine N-acyltransferase (326 aa).

His-225 acts as the Proton acceptor in catalysis.

The protein belongs to the transferase hexapeptide repeat family. LpxD subfamily. As to quaternary structure, homotrimer.

It carries out the reaction a UDP-3-O-[(3R)-3-hydroxyacyl]-alpha-D-glucosamine + a (3R)-hydroxyacyl-[ACP] = a UDP-2-N,3-O-bis[(3R)-3-hydroxyacyl]-alpha-D-glucosamine + holo-[ACP] + H(+). The protein operates within bacterial outer membrane biogenesis; LPS lipid A biosynthesis. Its function is as follows. Catalyzes the N-acylation of UDP-3-O-acylglucosamine using 3-hydroxyacyl-ACP as the acyl donor. Is involved in the biosynthesis of lipid A, a phosphorylated glycolipid that anchors the lipopolysaccharide to the outer membrane of the cell. The sequence is that of UDP-3-O-acylglucosamine N-acyltransferase from Verminephrobacter eiseniae (strain EF01-2).